Reading from the N-terminus, the 122-residue chain is Large ribosomal subunit protein uL14c (122 aa).

The protein belongs to the universal ribosomal protein uL14 family. In terms of assembly, part of the 50S ribosomal subunit.

The protein localises to the plastid. It localises to the chloroplast. Its function is as follows. Binds to 23S rRNA. The polypeptide is Large ribosomal subunit protein uL14c (Drimys granadensis).